A 366-amino-acid polypeptide reads, in one-letter code: sn-glycerol-3-phosphate import ATP-binding protein UgpC (366 aa).

The ABC transporter domain maps to 4–235 (LSLRNVQKTY…PASTFVAGFI (232 aa)). 37-44 (GPSGCGKS) provides a ligand contact to ATP.

The protein belongs to the ABC transporter superfamily. sn-glycerol-3-phosphate importer (TC 3.A.1.1.3) family. The complex is composed of two ATP-binding proteins (UgpC), two transmembrane proteins (UgpA and UgpE) and a solute-binding protein (UgpB).

Its subcellular location is the cell inner membrane. The catalysed reaction is sn-glycerol 3-phosphate(out) + ATP + H2O = sn-glycerol 3-phosphate(in) + ADP + phosphate + H(+). In terms of biological role, part of the ABC transporter complex UgpBAEC involved in sn-glycerol-3-phosphate (G3P) import. Responsible for energy coupling to the transport system. The chain is sn-glycerol-3-phosphate import ATP-binding protein UgpC from Cupriavidus necator (strain ATCC 17699 / DSM 428 / KCTC 22496 / NCIMB 10442 / H16 / Stanier 337) (Ralstonia eutropha).